A 103-amino-acid chain; its full sequence is MQPTRILQGLKYRKLRLTTKDVNKGFYKGNRTGSMGTHTSYGTYKIDYTKVRTYVCPDLTGFKLTPFVSKTIRPVHDQFPGDKLGPKNPATYLARWKSENGLD.

Belongs to the mitochondrion-specific ribosomal protein mL41 family. Component of the mitochondrial large ribosomal subunit (mt-LSU). Mature N.crassa 74S mitochondrial ribosomes consist of a small (37S) and a large (54S) subunit. The 37S small subunit contains a 16S ribosomal RNA (16S mt-rRNA) and 32 different proteins. The 54S large subunit contains a 23S rRNA (23S mt-rRNA) and 42 different proteins.

Its subcellular location is the mitochondrion. In terms of biological role, component of the mitochondrial ribosome (mitoribosome), a dedicated translation machinery responsible for the synthesis of mitochondrial genome-encoded proteins, including at least some of the essential transmembrane subunits of the mitochondrial respiratory chain. The mitoribosomes are attached to the mitochondrial inner membrane and translation products are cotranslationally integrated into the membrane. The chain is Large ribosomal subunit protein mL41 (mrpl27) from Neurospora crassa (strain ATCC 24698 / 74-OR23-1A / CBS 708.71 / DSM 1257 / FGSC 987).